Consider the following 155-residue polypeptide: Small ribosomal subunit protein uS7 (155 aa).

The protein belongs to the universal ribosomal protein uS7 family. As to quaternary structure, part of the 30S ribosomal subunit. Contacts proteins S9 and S11.

Functionally, one of the primary rRNA binding proteins, it binds directly to 16S rRNA where it nucleates assembly of the head domain of the 30S subunit. Is located at the subunit interface close to the decoding center, probably blocks exit of the E-site tRNA. The polypeptide is Small ribosomal subunit protein uS7 (Thermosipho melanesiensis (strain DSM 12029 / CIP 104789 / BI429)).